The following is a 279-amino-acid chain: MICNSQIAEGWHGKLNLVYADRQGATQLIYNQQQAPLKVQRPFYPEAEKVCHSVILHTAGGMVGGDRLSSNIHLQPQAQALITTAAASKIYRSNGLQARQTIQMQVDPGACLEWLPQETILFNDAIYRQDLRVELATGASWLGWEITRFGRSARGEKFLQGEWRSHTEIWQQSVPLWIDRQCLRGSEDIFHSPHGLAGKPIVGSLVWVGGAVSAEIVEKTRSLWNGEGEVGASRLQHGLLCRYRGSSTSEVRNWFIDVWQLLRVSFLNRGNCIPRVWQV.

Belongs to the UreD family. As to quaternary structure, ureD, UreF and UreG form a complex that acts as a GTP-hydrolysis-dependent molecular chaperone, activating the urease apoprotein by helping to assemble the nickel containing metallocenter of UreC. The UreE protein probably delivers the nickel.

The protein resides in the cytoplasm. Required for maturation of urease via the functional incorporation of the urease nickel metallocenter. The sequence is that of Urease accessory protein UreD from Nostoc punctiforme (strain ATCC 29133 / PCC 73102).